The following is a 674-amino-acid chain: ATP-dependent DNA helicase Rep (674 aa).

One can recognise a UvrD-like helicase ATP-binding domain in the interval 1–280; sequence MRLNPGQQHA…IKLEQNYRSS (280 aa). ATP-binding positions include 22–29 and arginine 278; that span reads AGAGSGKT. Residues 281–562 form the UvrD-like helicase C-terminal domain; it reads GRILKAANIL…QLMTLHASKG (282 aa).

It belongs to the helicase family. UvrD subfamily. In terms of assembly, homodimer.

The enzyme catalyses Couples ATP hydrolysis with the unwinding of duplex DNA by translocating in the 3'-5' direction.. The catalysed reaction is ATP + H2O = ADP + phosphate + H(+). Functionally, rep helicase is a single-stranded DNA-dependent ATPase involved in DNA replication; it can initiate unwinding at a nick in the DNA. It binds to the single-stranded DNA and acts in a progressive fashion along the DNA in the 3' to 5' direction. In Salmonella typhimurium (strain LT2 / SGSC1412 / ATCC 700720), this protein is ATP-dependent DNA helicase Rep.